Here is a 375-residue protein sequence, read N- to C-terminus: 23S rRNA (uracil(747)-C(5))-methyltransferase RlmC (375 aa).

4 residues coordinate [4Fe-4S] cluster: cysteine 3, cysteine 11, cysteine 14, and cysteine 87. Glutamine 212, phenylalanine 241, glutamate 262, and asparagine 307 together coordinate S-adenosyl-L-methionine. Catalysis depends on cysteine 334, which acts as the Nucleophile.

Belongs to the class I-like SAM-binding methyltransferase superfamily. RNA M5U methyltransferase family. RlmC subfamily.

It catalyses the reaction uridine(747) in 23S rRNA + S-adenosyl-L-methionine = 5-methyluridine(747) in 23S rRNA + S-adenosyl-L-homocysteine + H(+). Functionally, catalyzes the formation of 5-methyl-uridine at position 747 (m5U747) in 23S rRNA. This chain is 23S rRNA (uracil(747)-C(5))-methyltransferase RlmC, found in Escherichia coli O9:H4 (strain HS).